Reading from the N-terminus, the 298-residue chain is Ethanolamine ammonia-lyase small subunit (298 aa).

Residues Val210, Glu231, and Cys261 each coordinate adenosylcob(III)alamin.

Belongs to the EutC family. As to quaternary structure, the basic unit is a heterodimer which dimerizes to form tetramers. The heterotetramers trimerize; 6 large subunits form a core ring with 6 small subunits projecting outwards. Adenosylcob(III)alamin serves as cofactor.

The protein resides in the bacterial microcompartment. The enzyme catalyses ethanolamine = acetaldehyde + NH4(+). Its pathway is amine and polyamine degradation; ethanolamine degradation. Its function is as follows. Catalyzes the deamination of various vicinal amino-alcohols to oxo compounds. Allows this organism to utilize ethanolamine as the sole source of nitrogen and carbon in the presence of external vitamin B12. The chain is Ethanolamine ammonia-lyase small subunit from Salmonella schwarzengrund (strain CVM19633).